A 475-amino-acid polypeptide reads, in one-letter code: Lipid II flippase MurJ (475 aa).

The Cytoplasmic portion of the chain corresponds to 1-2; that stretch reads MS. A helical membrane pass occupies residues 3–23; sequence ILFSSILFSIATFFSRILGLF. Over 24 to 35 the chain is Periplasmic; the sequence is RDVLFAKYFGVS. The chain crosses the membrane as a helical span at residues 36-56; sequence YELDAYFIAIMFPFFLRKVFG. Residues 57–78 are Cytoplasmic-facing; that stretch reads EGAMSSAFVPLYSEKSGEEKDK. Residues 79–99 form a helical membrane-spanning segment; that stretch reads FLSSVINGFSLIILALVILSY. Residues 100–123 lie on the Periplasmic side of the membrane; the sequence is FFPELIINLFGAGSSHETKILAKK. The helical transmembrane segment at 124–144 threads the bilayer; the sequence is LLLITSPSIYFIFLWAISYSI. The Cytoplasmic portion of the chain corresponds to 145–150; the sequence is LNTNNK. A helical membrane pass occupies residues 151-171; the sequence is FFWPALTPSISNITIIIGTFL. Residues 172–175 are Periplasmic-facing; it reads STKY. Residues 176 to 196 form a helical membrane-spanning segment; it reads GIISPTIGFLIGSILMFFSII. Residues 197-213 are Cytoplasmic-facing; sequence KSIIKHKYYFTIKHFPH. Residues 214–238 traverse the membrane as a helical segment; that stretch reads FLKLFFPTFMTMVVSQINTVVDMNV. Residues 239 to 249 lie on the Periplasmic side of the membrane; it reads VSFYDKGSISY. Residues 250-271 form a helical membrane-spanning segment; that stretch reads LQYASRFYLLPYGLFAVSVSTV. Topologically, residues 272 to 287 are cytoplasmic; sequence VLSKISNDRKNFNYHL. A helical transmembrane segment spans residues 288-308; it reads NDALKTTLFFTIPSMVGLIFL. At 309-332 the chain is on the periplasmic side; that stretch reads STPIIRFFYEHGAFTSKDTLITSK. A helical transmembrane segment spans residues 333–353; the sequence is ILIAYTLGLPFYGIYSTISRS. Over 354–362 the chain is Cytoplasmic; sequence YHAIKNTKT. Residues 363–383 form a helical membrane-spanning segment; it reads PFIAATIVSLSNIILDIIFGL. Residues 384-386 lie on the Periplasmic side of the membrane; it reads KYG. Residues 387–407 traverse the membrane as a helical segment; the sequence is PIGVALATSIAGIIGVLYLLF. The Cytoplasmic segment spans residues 408 to 416; that stretch reads SVKTFPIKD. A helical membrane pass occupies residues 417–437; it reads FLKISLNSLIMLFVIYLTDFT. Over 438-440 the chain is Periplasmic; that stretch reads DNE. A helical transmembrane segment spans residues 441-461; it reads FWFLIQILIGILVYLIFSSIF. Residues 462–475 are Cytoplasmic-facing; that stretch reads YRDLIRRFLYARKK.

The protein belongs to the MurJ/MviN family.

It localises to the cell inner membrane. It participates in cell wall biogenesis; peptidoglycan biosynthesis. Its function is as follows. Involved in peptidoglycan biosynthesis. Transports lipid-linked peptidoglycan precursors from the inner to the outer leaflet of the cytoplasmic membrane. The chain is Lipid II flippase MurJ from Thermosipho africanus (strain TCF52B).